Consider the following 121-residue polypeptide: Large ribosomal subunit protein uL22c (121 aa).

It belongs to the universal ribosomal protein uL22 family. As to quaternary structure, part of the 50S ribosomal subunit.

It localises to the plastid. The protein localises to the chloroplast. Its function is as follows. This protein binds specifically to 23S rRNA. In terms of biological role, the globular domain of the protein is located near the polypeptide exit tunnel on the outside of the subunit, while an extended beta-hairpin is found that lines the wall of the exit tunnel in the center of the 70S ribosome. The protein is Large ribosomal subunit protein uL22c (rpl22) of Lemna minor (Common duckweed).